Here is a 358-residue protein sequence, read N- to C-terminus: Membrane-bound lytic murein transglycosylase C (358 aa).

Residues 1–16 (MKKILALLVIAPLLVS) form the signal peptide. A lipid anchor (N-palmitoyl cysteine) is attached at cysteine 17. Residue cysteine 17 is the site of S-diacylglycerol cysteine attachment.

The protein belongs to the transglycosylase Slt family.

The protein resides in the cell outer membrane. It catalyses the reaction Exolytic cleavage of the (1-&gt;4)-beta-glycosidic linkage between N-acetylmuramic acid (MurNAc) and N-acetylglucosamine (GlcNAc) residues in peptidoglycan, from either the reducing or the non-reducing ends of the peptidoglycan chains, with concomitant formation of a 1,6-anhydrobond in the MurNAc residue.. Its function is as follows. Murein-degrading enzyme. May play a role in recycling of muropeptides during cell elongation and/or cell division. The chain is Membrane-bound lytic murein transglycosylase C from Yersinia pseudotuberculosis serotype O:1b (strain IP 31758).